Reading from the N-terminus, the 41-residue chain is Large ribosomal subunit protein bL36 (41 aa).

It belongs to the bacterial ribosomal protein bL36 family.

This Cereibacter sphaeroides (strain ATCC 17029 / ATH 2.4.9) (Rhodobacter sphaeroides) protein is Large ribosomal subunit protein bL36.